Here is a 702-residue protein sequence, read N- to C-terminus: MAAPAAPAAGETGPDARLEAALADVPELARLLEIDPYLKPFAADFQRRYKKFSQVLHDIGENEGGIDKFSRGYESFGIHRCSDGGIYCKEWAPGAEGVFLTGEFSGWNPFSHPYKKLEYGKWELYIPPKQNKSPLIPHGSKLKVVITSKSGEILYRISPWAKYVVRENNNVNYDWIHWAPEDPYKFKHSRPKKPRSLRIYESHVGISSHEGKIASYKHFTSNVLPRIKDLGYNCIQLMAIMEHAYYASFGYQITSFFAASSRYGTPEELKELVDTAHSMGIVVLLDVVHSHASKNSEDGLNMFDGTDSCYFHSGPRGTHDLWDSRLFIYSSWEVLRFLLSNIRWWLEEYCFDGFRFDGVTSMLYHHHGMGQGFSGDYNEYFGLQVDEDALIYLMLANHLAHTLYPDSITIAEDVSGMPALCSPTSQGGGGFDYRLAMAIPDKWIQLLKEFKDEDWNMGNIVYTLTNRRYLEKCVAYAESHDQALVGDKTLAFWLMDAEMYTNMSVLAPFTPVIDRGIQLHKMIRLITHGLGGEGYLNFMGNEFGHPEWLDFPRKGNNESYHYARRQFNLTDDDLLRYKFLNNFDRDMNRLEERCGWLSAPQAYVSEKHEANKTITFERAGLLFIFNFHPSKSYTDYRVGTATPGKFKIVLDSDAAEYGGHQRLDHNTNYFAEAFEHNGRPYSLLVYIPSRVALILQNVDLQN.

Ala2 bears the N-acetylalanine mark. Residues Asn62–Glu63 and Trp91–Pro93 contribute to the substrate site. Trp107 contacts (1,4-alpha-D-glucosyl)n. Position 118-121 (Glu118–Lys121) interacts with substrate. A (1,4-alpha-D-glucosyl)n-binding site is contributed by Lys143. Phosphotyrosine is present on Tyr173. Residue Glu333–Arg336 coordinates substrate. Residue Asp357 is the Nucleophile of the active site. The active-site Proton donor is the Glu412.

It belongs to the glycosyl hydrolase 13 family. GlgB subfamily. In terms of assembly, monomer.

The enzyme catalyses Transfers a segment of a (1-&gt;4)-alpha-D-glucan chain to a primary hydroxy group in a similar glucan chain.. It functions in the pathway glycan biosynthesis; glycogen biosynthesis. Functionally, glycogen-branching enzyme participates in the glycogen biosynthetic process along with glycogenin and glycogen synthase. Generates alpha-1,6-glucosidic branches from alpha-1,4-linked glucose chains, to increase solubility of the glycogen polymer. In Mus musculus (Mouse), this protein is 1,4-alpha-glucan-branching enzyme (Gbe1).